The sequence spans 165 residues: Natriuretic peptide Na-NP (165 aa).

Residues 1–25 form the signal peptide; sequence MVGLSRLAGGGLLLVLALLPLALDG. The propeptide occupies 26–83; that stretch reads KPAPEALHKPPTGLRTSLAALRILGYLRPDSKQSRAARDRMLHPEQQVGGGGDSRPLQ. Residues 56 to 68 show a composition bias toward basic and acidic residues; the sequence is SKQSRAARDRMLH. Disordered stretches follow at residues 56–100 and 135–165; these read SKQS…QKID and PDSK…SRVI. A disulfide bond links cysteine 94 and cysteine 110. Positions 129–165 are excised as a propeptide; that stretch reads ILEYLRPDSKRSRATRDRMLHPEQQVGGGGGGGSRVI. Residues 135-149 are compositionally biased toward basic and acidic residues; it reads PDSKRSRATRDRMLH. A compositionally biased stretch (gly residues) spans 154–165; the sequence is VGGGGGGGSRVI.

The protein belongs to the natriuretic peptide family. As to expression, expressed by the venom gland.

It localises to the secreted. In terms of biological role, natriuretic peptide that dose-dependently induces the rapid relaxation of rat aortic strips phenylephrine-precontracted. Acts by stimulating cGMP production in a dose-dependent manner (by probably activating NPR1 and/or NPR2). May also show potent hypotensive effects. The protein is Natriuretic peptide Na-NP of Naja atra (Chinese cobra).